A 181-amino-acid polypeptide reads, in one-letter code: Adenine phosphoribosyltransferase (181 aa).

The protein belongs to the purine/pyrimidine phosphoribosyltransferase family. In terms of assembly, homodimer.

The protein localises to the cytoplasm. The catalysed reaction is AMP + diphosphate = 5-phospho-alpha-D-ribose 1-diphosphate + adenine. The protein operates within purine metabolism; AMP biosynthesis via salvage pathway; AMP from adenine: step 1/1. Functionally, catalyzes a salvage reaction resulting in the formation of AMP, that is energically less costly than de novo synthesis. The polypeptide is Adenine phosphoribosyltransferase (Aeromonas salmonicida (strain A449)).